Consider the following 218-residue polypeptide: MNLASISQSYMSHNENERSIVPYIPPPYHPTAPALAVSASQMETMSLGILNQAMSSSAGASGALKDEKAAYGAVAEALRDPEPIRKIKRQVGIQTLKTLKVELSGMRRKKLILKIIMFICANVTMATSLVGGMSIVDEDIAKHLAFDGKGDWVSKTVHGLNLLCTTMLLAANKISEKVREEIARTKRDIAKRQSYVSAATMSWDGDSVTQLRDVKYGD.

Belongs to the orbivirus NS3 family.

Its function is as follows. May play a role in the release of virions from infected cells. This Camelus dromedarius (Dromedary) protein is Non-structural protein NS3 (Segment-10).